The chain runs to 158 residues: Curculin-2 (158 aa).

An N-terminal signal peptide occupies residues methionine 1–alanine 22. The 109-residue stretch at aspartate 23–cysteine 131 folds into the Bulb-type lectin domain. A disulfide bridge links cysteine 51 with cysteine 74. Asparagine 103 is a glycosylation site (N-linked (GlcNAc...) asparagine). Residues glycine 136–asparagine 158 constitute a propeptide that is removed on maturation.

In terms of assembly, heterodimer with curculin-1; Disulfide-linked.

Taste-modifying protein; sweet-tasting. After curculin, water elicits a sweet taste, and sour substances induce a stronger sense of sweetness. This Molineria latifolia (Lumbah) protein is Curculin-2.